A 116-amino-acid chain; its full sequence is Toxin ICK-10 (116 aa).

Positions 1-19 (MMKLYSLVIIATLAAAAFA) are cleaved as a signal peptide. 4 disulfide bridges follow: C56/C71, C64/C77, C68/C113, and C70/C84.

It belongs to the neurotoxin 25 family. ICK-8 subfamily. As to expression, expressed by the venom gland.

The protein localises to the secreted. Ion channel inhibitor. The protein is Toxin ICK-10 of Trittame loki (Brush-footed trapdoor spider).